The chain runs to 440 residues: Proline--tRNA ligase (440 aa).

This sequence belongs to the class-II aminoacyl-tRNA synthetase family. ProS type 2 subfamily. Homodimer.

It is found in the cytoplasm. It catalyses the reaction tRNA(Pro) + L-proline + ATP = L-prolyl-tRNA(Pro) + AMP + diphosphate. Its function is as follows. Catalyzes the attachment of proline to tRNA(Pro) in a two-step reaction: proline is first activated by ATP to form Pro-AMP and then transferred to the acceptor end of tRNA(Pro). The chain is Proline--tRNA ligase from Rhizobium johnstonii (strain DSM 114642 / LMG 32736 / 3841) (Rhizobium leguminosarum bv. viciae).